The chain runs to 352 residues: S-adenosylmethionine:tRNA ribosyltransferase-isomerase (352 aa).

This sequence belongs to the QueA family. In terms of assembly, monomer.

It is found in the cytoplasm. The enzyme catalyses 7-aminomethyl-7-carbaguanosine(34) in tRNA + S-adenosyl-L-methionine = epoxyqueuosine(34) in tRNA + adenine + L-methionine + 2 H(+). The protein operates within tRNA modification; tRNA-queuosine biosynthesis. In terms of biological role, transfers and isomerizes the ribose moiety from AdoMet to the 7-aminomethyl group of 7-deazaguanine (preQ1-tRNA) to give epoxyqueuosine (oQ-tRNA). This Cupriavidus necator (strain ATCC 17699 / DSM 428 / KCTC 22496 / NCIMB 10442 / H16 / Stanier 337) (Ralstonia eutropha) protein is S-adenosylmethionine:tRNA ribosyltransferase-isomerase.